The primary structure comprises 390 residues: Enoyl-[acyl-carrier-protein] reductase [NADH], chloroplastic (390 aa).

The transit peptide at 1–74 directs the protein to the chloroplast; that stretch reads MAATAASSLQ…CKRPFSFSTR (74 aa). The NADP(+) site is built by Leu-53 and Asn-170. The active-site Proton donor is the Ser-239. 2 residues coordinate NADP(+): Lys-282 and Ser-314. The active-site Lowers pKa of active site Tyr is Lys-282.

This sequence belongs to the short-chain dehydrogenases/reductases (SDR) family. FabI subfamily. In terms of assembly, homotetramer. In terms of tissue distribution, expressed in flowers and siliques and at lower levels in roots and leaves (at protein level).

The protein resides in the plastid. The protein localises to the chloroplast. The catalysed reaction is a 2,3-saturated acyl-[ACP] + NAD(+) = a (2E)-enoyl-[ACP] + NADH + H(+). The protein operates within lipid metabolism; fatty acid biosynthesis. Inhibited by the phytotoxin cyperin and the synthetic antimicrobial compound triclosan. Its function is as follows. Catalyzes the NAD-dependent reduction of a carbon-carbon double bond in an enoyl moiety that is covalently linked to an acyl carrier protein (ACP). Catalyzes the last reduction step in the de novo synthesis cycle of fatty acids. Involved in the elongation cycle of fatty acids which are used in lipid metabolism. Required for normal plant growth. The polypeptide is Enoyl-[acyl-carrier-protein] reductase [NADH], chloroplastic (MOD1) (Arabidopsis thaliana (Mouse-ear cress)).